A 193-amino-acid chain; its full sequence is Iron-sulfur flavoprotein MJ1083 (193 aa).

[4Fe-4S] cluster is bound by residues Cys-47, Cys-50, Cys-53, and Cys-59.

It belongs to the SsuE family. Isf subfamily. In terms of assembly, homodimer. The cofactor is FMN. [4Fe-4S] cluster serves as cofactor.

In terms of biological role, redox-active protein probably involved in electron transport. The protein is Iron-sulfur flavoprotein MJ1083 of Methanocaldococcus jannaschii (strain ATCC 43067 / DSM 2661 / JAL-1 / JCM 10045 / NBRC 100440) (Methanococcus jannaschii).